Reading from the N-terminus, the 623-residue chain is Prothrombin (623 aa).

Residues 1–24 (MAHVGGLWLHGCLALAVLVSLVHS) form the signal peptide. Residues 25–43 (QHVFMAPQQALSLLQRARR) constitute a propeptide that is removed on maturation. The Gla domain occupies 44–90 (ANSGFFEEMRKGNLERECVEEQCSREEAYEALESPSETDAFWAKYTA). 4-carboxyglutamate occurs at positions 50, 51, 58, 60, 63, 64, 69, 70, 73, and 76. The cysteines at positions 61 and 66 are disulfide-linked. Disulfide bonds link cysteine 91–cysteine 104, cysteine 109–cysteine 187, cysteine 130–cysteine 170, cysteine 158–cysteine 182, cysteine 214–cysteine 292, cysteine 235–cysteine 275, cysteine 263–cysteine 287, cysteine 337–cysteine 483, cysteine 392–cysteine 408, cysteine 537–cysteine 551, and cysteine 565–cysteine 595. Kringle domains are found at residues 108 to 187 (NCAE…IPVC) and 213 to 292 (TCVP…LDYC). Asparagine 120 and asparagine 144 each carry an N-linked (GlcNAc...) asparagine glycan. The Peptidase S1 domain maps to 365–619 (IVEGSDAEIG…LKKWMQKVID (255 aa)). Histidine 407 functions as the Charge relay system in the catalytic mechanism. An N-linked (GlcNAc...) asparagine glycan is attached at asparagine 417. Residue aspartate 463 is the Charge relay system of the active site. Positions 552 to 574 (AGYKPDEGKRGDACEGDSGGPFV) are high affinity receptor-binding region which is also known as the TP508 peptide. Catalysis depends on serine 569, which acts as the Charge relay system.

It belongs to the peptidase S1 family. As to quaternary structure, heterodimer (named alpha-thrombin) of a light and a heavy chain; disulfide-linked. Forms a heterodimer with SERPINA5. In plasma, interacts (via N-terminus) with alpha-1-microglobulin; this interaction does not prevent the activation of prothrombin to thrombin. The gamma-carboxyglutamyl residues, which bind calcium ions, result from the carboxylation of glutamyl residues by a microsomal enzyme, the vitamin K-dependent carboxylase. The modified residues are necessary for the calcium-dependent interaction with a negatively charged phospholipid surface, which is essential for the conversion of prothrombin to thrombin. Post-translationally, in the penultimate step of the coagulation cascade, prothrombin is converted to thrombin by the prothrombinase complex composed of factor Xa (F10), cofactor Va (F5), and phospholipids. This activation requires factor Xa-catalyzed sequential cleavage at 2 sites, Arg-315 and Arg-364, along 2 possible pathways. In the first pathway, the first cleavage occurs at Arg-315, leading to the formation of the inactive intermediate prethrombin-2. This pathway preferentially occurs on platelets and in the absence of cofactor Va. In the second pathway, the first cleavage occurs at Arg-364, which separates protease domain into 2 chains that remain connected through a disulfide bond and generates the active intermediate meizothrombin. The presence of cofactor Va directs activation along the meizothrombin pathway and greatly accelerates the rate of cleavage at Arg-364, but has a smaller effect on the cleavage of meizothrombin at Arg-315. Meizothrombin accumulates as an intermediate when prothrombinase is assembled on the membrane of red blood cells.

It catalyses the reaction Selective cleavage of Arg-|-Gly bonds in fibrinogen to form fibrin and release fibrinopeptides A and B.. Activity is promoted in the presence of negatively charged surfaces, such as polyphosphate and dextran sulfate. Inhibited by SERPINA5. Its function is as follows. Thrombin, which cleaves bonds after Arg and Lys, converts fibrinogen to fibrin and activates factors V, VII, VIII, XIII, and, in complex with thrombomodulin, protein C. Functions in blood homeostasis, inflammation and wound healing. Activates coagulation factor XI (F11); activation is promoted by the contact with negatively charged surfaces. Triggers the production of pro-inflammatory cytokines, such as MCP-1/CCL2 and IL8/CXCL8, in endothelial cells. The sequence is that of Prothrombin (F2) from Sus scrofa (Pig).